Consider the following 207-residue polypeptide: dITP/XTP pyrophosphatase (207 aa).

A substrate-binding site is contributed by 8–13 (TNNKNK). Aspartate 72 serves as the catalytic Proton acceptor. Aspartate 72 contributes to the Mg(2+) binding site. Substrate contacts are provided by residues serine 73, 157-160 (FGYD), lysine 180, and 185-186 (HR).

Belongs to the HAM1 NTPase family. In terms of assembly, homodimer. The cofactor is Mg(2+).

The enzyme catalyses XTP + H2O = XMP + diphosphate + H(+). The catalysed reaction is dITP + H2O = dIMP + diphosphate + H(+). It carries out the reaction ITP + H2O = IMP + diphosphate + H(+). Functionally, pyrophosphatase that catalyzes the hydrolysis of nucleoside triphosphates to their monophosphate derivatives, with a high preference for the non-canonical purine nucleotides XTP (xanthosine triphosphate), dITP (deoxyinosine triphosphate) and ITP. Seems to function as a house-cleaning enzyme that removes non-canonical purine nucleotides from the nucleotide pool, thus preventing their incorporation into DNA/RNA and avoiding chromosomal lesions. The sequence is that of dITP/XTP pyrophosphatase from Lactobacillus johnsonii (strain CNCM I-12250 / La1 / NCC 533).